A 936-amino-acid polypeptide reads, in one-letter code: Isoleucine--tRNA ligase (936 aa).

The 'HIGH' region signature appears at 58-68 (PYANGRAHLGT). Residue glutamate 561 participates in L-isoleucyl-5'-AMP binding. Positions 602–606 (KMSKS) match the 'KMSKS' region motif. Lysine 605 contributes to the ATP binding site. Positions 899, 902, 919, and 922 each coordinate Zn(2+).

It belongs to the class-I aminoacyl-tRNA synthetase family. IleS type 1 subfamily. Monomer. Zn(2+) serves as cofactor.

It localises to the cytoplasm. It carries out the reaction tRNA(Ile) + L-isoleucine + ATP = L-isoleucyl-tRNA(Ile) + AMP + diphosphate. Catalyzes the attachment of isoleucine to tRNA(Ile). As IleRS can inadvertently accommodate and process structurally similar amino acids such as valine, to avoid such errors it has two additional distinct tRNA(Ile)-dependent editing activities. One activity is designated as 'pretransfer' editing and involves the hydrolysis of activated Val-AMP. The other activity is designated 'posttransfer' editing and involves deacylation of mischarged Val-tRNA(Ile). In Coxiella burnetii (strain CbuG_Q212) (Coxiella burnetii (strain Q212)), this protein is Isoleucine--tRNA ligase.